A 237-amino-acid chain; its full sequence is ATP synthase subunit a (237 aa).

A run of 6 helical transmembrane segments spans residues 18–38, 77–97, 103–123, 132–152, 185–205, and 209–229; these read STLWMAIGVLMIALLMVVGTL, IFTLFLFILFSNFLGLIPMAF, IAVTGVMAMGVFIGVTALGFM, LFWVSAAPLPLRPILAVIEVI, LILFSFVGVIVTPLSVLAIVA, and LEILVAFVQAYVFTILTCVYL.

It belongs to the ATPase A chain family. As to quaternary structure, F-type ATPases have 2 components, CF(1) - the catalytic core - and CF(0) - the membrane proton channel. CF(1) has five subunits: alpha(3), beta(3), gamma(1), delta(1), epsilon(1). CF(0) has three main subunits: a(1), b(2) and c(9-12). The alpha and beta chains form an alternating ring which encloses part of the gamma chain. CF(1) is attached to CF(0) by a central stalk formed by the gamma and epsilon chains, while a peripheral stalk is formed by the delta and b chains.

Its subcellular location is the cellular chromatophore membrane. Key component of the proton channel; it plays a direct role in the translocation of protons across the membrane. The protein is ATP synthase subunit a of Rhodobacter capsulatus (Rhodopseudomonas capsulata).